A 236-amino-acid chain; its full sequence is Sugar fermentation stimulation protein homolog (236 aa).

Belongs to the SfsA family.

The chain is Sugar fermentation stimulation protein homolog from Methylobacterium nodulans (strain LMG 21967 / CNCM I-2342 / ORS 2060).